A 349-amino-acid chain; its full sequence is Protein-glutamate methylesterase/protein-glutamine glutaminase (349 aa).

In terms of domain architecture, Response regulatory spans Arg-5 to Met-122. 4-aspartylphosphate is present on Asp-56. One can recognise a CheB-type methylesterase domain in the interval Leu-152–Gly-344. Catalysis depends on residues Ser-164, His-190, and Asp-286.

This sequence belongs to the CheB family. Post-translationally, phosphorylated by CheA. Phosphorylation of the N-terminal regulatory domain activates the methylesterase activity.

Its subcellular location is the cytoplasm. It catalyses the reaction [protein]-L-glutamate 5-O-methyl ester + H2O = L-glutamyl-[protein] + methanol + H(+). The enzyme catalyses L-glutaminyl-[protein] + H2O = L-glutamyl-[protein] + NH4(+). Its function is as follows. Involved in chemotaxis. Part of a chemotaxis signal transduction system that modulates chemotaxis in response to various stimuli. Catalyzes the demethylation of specific methylglutamate residues introduced into the chemoreceptors (methyl-accepting chemotaxis proteins or MCP) by CheR. Also mediates the irreversible deamidation of specific glutamine residues to glutamic acid. The sequence is that of Protein-glutamate methylesterase/protein-glutamine glutaminase from Escherichia coli O6:K15:H31 (strain 536 / UPEC).